Consider the following 1612-residue polypeptide: Mediator of RNA polymerase II transcription subunit 12 (1612 aa).

2 disordered regions span residues 18–114 (AVYS…PSLS) and 1514–1547 (PVSIPSPAASGSTPAPTPSGNPTGGFSHPQQPAF). Basic and acidic residues predominate over residues 66-80 (VLEREPPAKRLKIDV). 2 stretches are compositionally biased toward low complexity: residues 99–114 (SKSTPSATTSKPPSLS) and 1518–1538 (PSPAASGSTPAPTPSGNPTGG).

This sequence belongs to the Mediator complex subunit 12 family. As to quaternary structure, component of the srb8-11 complex, which itself associates with the Mediator complex.

It is found in the nucleus. Functionally, component of the srb8-11 complex. The srb8-11 complex is a regulatory module of the Mediator complex which is itself involved in regulation of basal and activated RNA polymerase II-dependent transcription. The srb8-11 complex may be involved in the transcriptional repression of a subset of genes regulated by Mediator. It may inhibit the association of the Mediator complex with RNA polymerase II to form the holoenzyme complex. The protein is Mediator of RNA polymerase II transcription subunit 12 (srb8) of Neosartorya fischeri (strain ATCC 1020 / DSM 3700 / CBS 544.65 / FGSC A1164 / JCM 1740 / NRRL 181 / WB 181) (Aspergillus fischerianus).